The following is a 267-amino-acid chain: MAAYLVQNQWGGSQATWNPGGLWLIGARDKQNVVALDIKSDDGGKTLKGTMTYNGEGPIGFRGTLSSANNYTVENQWGGTSAPWQPGGVWVLGARDKQNIVAVSIKSNDGGKTLTGTTTYNGEGPIGFKSEVTDGDTYSVENQWGGSAAPWHSGGVWVLGTRGKQNVINVDAKSNDGGKTLSGTMTYNGEGPIGFRGTLTSPDTYTVENQWGGSTAPWNPGGFWMIGARNGQNVVALNVASSDGGKTLAGTMIYNGEGPIGFRARLG.

4 consecutive repeat copies span residues 1–66 (MAAY…GTLS), 67–133 (SANN…SEVT), 134–200 (DGDT…GTLT), and 201–267 (SPDT…ARLG). Residues 1–267 (MAAYLVQNQW…GPIGFRARLG (267 aa)) are 4 X 65 AA tandem repeats.

Belongs to the bacterial lectin family.

Its function is as follows. This lectin might have a role in the differentiation of cells. The protein is Myxobacterial hemagglutinin (mbhA) of Myxococcus xanthus.